Consider the following 161-residue polypeptide: Regulator of ribonuclease activity A (161 aa).

Belongs to the RraA family. In terms of assembly, homotrimer. Binds to both RNA-binding sites in the C-terminal region of Rne and to RhlB.

The protein localises to the cytoplasm. Globally modulates RNA abundance by binding to RNase E (Rne) and regulating its endonucleolytic activity. Can modulate Rne action in a substrate-dependent manner by altering the composition of the degradosome. Modulates RNA-binding and helicase activities of the degradosome. The polypeptide is Regulator of ribonuclease activity A (Idiomarina loihiensis (strain ATCC BAA-735 / DSM 15497 / L2-TR)).